A 412-amino-acid chain; its full sequence is Serine hydroxymethyltransferase (412 aa).

Residues leucine 117 and 121–123 (GHL) each bind (6S)-5,6,7,8-tetrahydrofolate. Lysine 226 is modified (N6-(pyridoxal phosphate)lysine). (6S)-5,6,7,8-tetrahydrofolate is bound at residue 349 to 351 (SPF).

Belongs to the SHMT family. Homodimer. Pyridoxal 5'-phosphate serves as cofactor.

It localises to the cytoplasm. The catalysed reaction is (6R)-5,10-methylene-5,6,7,8-tetrahydrofolate + glycine + H2O = (6S)-5,6,7,8-tetrahydrofolate + L-serine. Its pathway is one-carbon metabolism; tetrahydrofolate interconversion. The protein operates within amino-acid biosynthesis; glycine biosynthesis; glycine from L-serine: step 1/1. Catalyzes the reversible interconversion of serine and glycine with tetrahydrofolate (THF) serving as the one-carbon carrier. This reaction serves as the major source of one-carbon groups required for the biosynthesis of purines, thymidylate, methionine, and other important biomolecules. Also exhibits THF-independent aldolase activity toward beta-hydroxyamino acids, producing glycine and aldehydes, via a retro-aldol mechanism. The chain is Serine hydroxymethyltransferase from Lawsonia intracellularis (strain PHE/MN1-00).